The chain runs to 785 residues: Probable cationic amino acid transporter (785 aa).

The next 15 helical transmembrane spans lie at 58–78 (LVSLGVGSCVGTGMYVVSGLV), 83–103 (AGPGVIVSFIIAAVASILSGV), 119–141 (AYTYSYVTVGEFVAFFIGWNLIL), 187–207 (YPDILALVIGILVTVIVALGV), 216–236 (VLNVINLVVWVFIMIAGLFFV), 251–271 (WSGVMQGAATCFYAFIGFDII), 291–311 (ASLVTCLTAYVSVSVILTLMV), 337–357 (IVAIGSIAGLTVSLLGSLFPM), 360–380 (VIYAMAGDGLLFRFLAHVSTY), 384–404 (PAVACVVSGFLSALLALLVSL), 407–427 (LIEMMSIGTLLAYTLVSVCVL), 568–588 (CVVLLFILIFCFCSLIIFGSG), 596–616 (WAVLLLVVLLLVLTLLVFIII), 628–648 (MAPCVPFVPASAMLVNVYLML), and 655–675 (WIRFGVWCFVGVLIYFGYGMW). The disordered stretch occupies residues 715–785 (DQGPFQNWGK…VDDDLDDPLE (71 aa)). A compositionally biased stretch (low complexity) spans 727-740 (QQKQPQQEQSEPQS). A compositionally biased stretch (acidic residues) spans 775 to 785 (VVDDDLDDPLE).

The protein belongs to the amino acid-polyamine-organocation (APC) superfamily.

The protein localises to the lysosome membrane. In terms of biological role, may be involved in arginine transport. This Danio rerio (Zebrafish) protein is Probable cationic amino acid transporter (slc7a14a).